A 368-amino-acid polypeptide reads, in one-letter code: Regulatory protein E2 (368 aa).

The segment at 1–200 is transactivation domain; that stretch reads MEAIAKRLDA…TVICSPASVS (200 aa). Polar residues predominate over residues 208–226; sequence IPESTTYTPAQTSTLVSSS. Residues 208 to 241 are disordered; that stretch reads IPESTTYTPAQTSTLVSSSTKEDAVQTPPRKRAR. The segment at 284–368 is DNA-binding domain; the sequence is ATPIVQFQGE…KLGFMSLHLL (85 aa).

Belongs to the papillomaviridae E2 protein family. Binds DNA as homodimer. Interacts with protein E1; this interaction greatly increases E1 DNA-binding activity. Interacts with protein L1; this interaction enhances E2-dependent replication and transcription activation. Interacts with protein L2; this interaction inhibits E2 transcriptional activity but not DNA replication function E2. Interacts with protein E7; this interaction inhibits E7 oncogenic activity. Interacts with host TAF1; this interaction modulates E2-dependent transcriptional regulation. Interacts with host BRD4; this interaction mediates E2 transcriptional activation function. Additionally, the interaction with host BRD4 on mitotic chromosomes mediates tethering of the viral genome. Interacts with host TOPBP1; this interaction is required for optimal viral DNA replication. Phosphorylated.

It is found in the host nucleus. Plays a role in the initiation of viral DNA replication. A dimer of E2 interacts with a dimer of E1 in order to improve specificity of E1 DNA binding activity. Once the complex recognizes and binds DNA at specific sites, the E2 dimer is removed from DNA. E2 also regulates viral transcription through binding to the E2RE response element (5'-ACCNNNNNNGGT-3') present in multiple copies in the regulatory regions of the viral genome. Activates or represses transcription depending on E2RE's position with regards to proximal promoter elements including the TATA-box. Repression occurs by sterically hindering the assembly of the transcription initiation complex. The polypeptide is Regulatory protein E2 (Human papillomavirus type 6b).